The sequence spans 377 residues: Opsin-5 (377 aa).

Residues 1–33 (MALNHTALPQDERLPHYLRDEDPFASKLSWEAD) are Extracellular-facing. The N-linked (GlcNAc...) asparagine glycan is linked to N4. The chain crosses the membrane as a helical span at residues 34-54 (LVAGFYLTIIGILSTFGNGYV). The Cytoplasmic portion of the chain corresponds to 55-74 (LYMSSRRKKKLRPAEIMTIN). The chain crosses the membrane as a helical span at residues 75 to 95 (LAVCDLGISVVGKPFTIISCF). Residues 96-108 (CHRWVFGWFGCRW) lie on the Extracellular side of the membrane. C106 and C183 are disulfide-bonded. The helical transmembrane segment at 109–129 (YGWAGFFFGCGSLITMTAVSL) threads the bilayer. The Cytoplasmic segment spans residues 130 to 150 (DRYLKICYLSYGVWLKRKHAY). The helical transmembrane segment at 151–171 (ICLAVIWAYASFWTTMPLVGL) threads the bilayer. At 172 to 197 (GDYAPEPFGTSCTLDWWLAQASGGGQ) the chain is on the extracellular side. The helical transmembrane segment at 198 to 218 (VFILSILFFCLLLPTAVIVFS) threads the bilayer. Topologically, residues 219-252 (YAKIIAKVKSSSKEVAHFDSRIHSSHVLEVKLTK) are cytoplasmic. The chain crosses the membrane as a helical span at residues 253–273 (VAMLICAGFLIAWIPYAVVSV). The Extracellular segment spans residues 274-288 (WSAFGRPDSIPIQLS). A helical membrane pass occupies residues 289-309 (VVPTLLAKSAAMYNPIIYQVI). K296 carries the post-translational modification N6-(retinylidene)lysine. Residues 310 to 377 (DYRFACCQAG…HSNDGDCGKK (68 aa)) are Cytoplasmic-facing. Residues C315 and C316 are each lipidated (S-palmitoyl cysteine). A disordered region spans residues 357-377 (FTSAHVMDGESHSNDGDCGKK). Residues 363–377 (MDGESHSNDGDCGKK) are compositionally biased toward basic and acidic residues.

This sequence belongs to the G-protein coupled receptor 1 family. Opsin subfamily. In terms of processing, it is uncertain whether Cys-315 or Cys-316 is palmitoylated. Expressed in the brain (at protein level). Weakly expressed in the skin and liver (at protein level). Abundantly expressed in striated muscle cells. Expressed in Math7/Atok7-dependent retinal ganglion cells in the ganglion cell layer (at protein level). Additionally expressed in horizontal and amacrine cells in the inner nuclear layer of the retina (at protein level). Expressed around the base of hair follicles and in epidermal and sebaceous gland cells of the outer ear (at protein level). Abundantly expressed in vibrissae hair follicles and weakly expressed in the vibrissae skin pad, dorsal back skin, and tail.

The protein localises to the cell membrane. G-protein coupled receptor which selectively activates G(i) type G proteins via ultraviolet A (UVA) light-mediated activation in the retina. Preferentially binds the chromophore 11-cis retinal and is a bistable protein that displays emission peaks at 380 nm (UVA light) and 470 nm (blue light). Required for the light-response in the inner plexiform layer, and contributes to the regulation of the light-response in the nerve fiber layer, via phosphorylated DAT/SLC6A3 dopamine uptake. Involved in local corneal and retinal circadian rhythm photoentrainment via modulation of the UVA light-induced phase-shift of the retina clock. Acts as a circadian photoreceptor in the outer ear and vibrissal pads, via modulation of circadian clock-gene expression in response to violet light during the light-to-dark transition phase and night phase of the circadian cycle. Required in the retina to negatively regulate hyaloid vessel regression during postnatal development via light-dependent OPN5-SLC32A1-DRD2-VEGFR2 signaling. Involved in the light-dependent regulation of retina and vitreous compartment dopamine levels. The chain is Opsin-5 (Opn5) from Mus musculus (Mouse).